A 274-amino-acid polypeptide reads, in one-letter code: 3-methyl-2-oxobutanoate hydroxymethyltransferase (274 aa).

Mg(2+) contacts are provided by Asp49 and Asp88. Residues Asp49–Ser50, Asp88, and Lys118 each bind 3-methyl-2-oxobutanoate. Glu120 contributes to the Mg(2+) binding site. The Proton acceptor role is filled by Glu187.

Belongs to the PanB family. As to quaternary structure, homodecamer; pentamer of dimers. It depends on Mg(2+) as a cofactor.

Its subcellular location is the cytoplasm. It catalyses the reaction 3-methyl-2-oxobutanoate + (6R)-5,10-methylene-5,6,7,8-tetrahydrofolate + H2O = 2-dehydropantoate + (6S)-5,6,7,8-tetrahydrofolate. It functions in the pathway cofactor biosynthesis; (R)-pantothenate biosynthesis; (R)-pantoate from 3-methyl-2-oxobutanoate: step 1/2. Its function is as follows. Catalyzes the reversible reaction in which hydroxymethyl group from 5,10-methylenetetrahydrofolate is transferred onto alpha-ketoisovalerate to form ketopantoate. In Allorhizobium ampelinum (strain ATCC BAA-846 / DSM 112012 / S4) (Agrobacterium vitis (strain S4)), this protein is 3-methyl-2-oxobutanoate hydroxymethyltransferase.